The primary structure comprises 399 residues: Cell division protein FtsZ (399 aa).

GTP is bound by residues 30-34 (GGGSN), 117-119 (GTG), E148, K152, and D196. The tract at residues 349–368 (TLMSGNQNAPSGSYEQQDSS) is disordered. Positions 351–368 (MSGNQNAPSGSYEQQDSS) are enriched in polar residues.

This sequence belongs to the FtsZ family. In terms of assembly, homodimer. Polymerizes to form a dynamic ring structure in a strictly GTP-dependent manner. Interacts directly with several other division proteins.

It localises to the cytoplasm. In terms of biological role, essential cell division protein that forms a contractile ring structure (Z ring) at the future cell division site. The regulation of the ring assembly controls the timing and the location of cell division. One of the functions of the FtsZ ring is to recruit other cell division proteins to the septum to produce a new cell wall between the dividing cells. Binds GTP and shows GTPase activity. This chain is Cell division protein FtsZ, found in Borreliella burgdorferi (strain ATCC 35210 / DSM 4680 / CIP 102532 / B31) (Borrelia burgdorferi).